Reading from the N-terminus, the 494-residue chain is Ell-associated factor Eaf (494 aa).

A compositionally biased stretch (polar residues) spans 119–138 (KTRSEVTNKPSLMSATNAPM). Disordered stretches follow at residues 119–212 (KTRS…PAWH) and 243–494 (QANI…DDDD). The span at 139–156 (SNGAPVPSSAAAGTGSAG) shows a compositional bias: low complexity. Positions 159 to 178 (ENSTMRISSKTKVSTGSRRN) are enriched in polar residues. Serine 188 carries the post-translational modification Phosphoserine. Composition is skewed to polar residues over residues 243 to 256 (QANI…SSAG) and 280 to 306 (QQLT…NNYA). Over residues 307 to 319 (QQQQQQQQQQLQQ) the composition is skewed to low complexity. Residues 320–332 (RASFSHSNHSNSM) show a composition bias toward polar residues. The segment covering 344–373 (QTAQSMAQAAAALEQQIGGELSASSSSSES) has biased composition (low complexity). Positions 374–389 (DSSDSDSGSDSDDSTE) are enriched in acidic residues. Low complexity predominate over residues 414–424 (HQQQQHMHQLP). The segment covering 437-454 (SHHHHQQQQQSHHHHHHQ) has biased composition (basic residues). Low complexity-rich tracts occupy residues 455-464 (QQQQQQHQQS) and 475-488 (NDLL…SSNS).

This sequence belongs to the EAF family.

The protein resides in the nucleus. Its function is as follows. Promotes transcriptional elongation by Su(Tpl)/ELL. Essential for development. The sequence is that of Ell-associated factor Eaf from Drosophila virilis (Fruit fly).